A 230-amino-acid chain; its full sequence is Orotidine 5'-phosphate decarboxylase (230 aa).

Residues Asp10, Lys31, 58–67 (DLKLHDIPNT), Thr117, Arg179, Gln188, Gly208, and Arg209 each bind substrate. Lys60 (proton donor) is an active-site residue.

The protein belongs to the OMP decarboxylase family. Type 1 subfamily. In terms of assembly, homodimer.

It catalyses the reaction orotidine 5'-phosphate + H(+) = UMP + CO2. Its pathway is pyrimidine metabolism; UMP biosynthesis via de novo pathway; UMP from orotate: step 2/2. In terms of biological role, catalyzes the decarboxylation of orotidine 5'-monophosphate (OMP) to uridine 5'-monophosphate (UMP). This is Orotidine 5'-phosphate decarboxylase from Staphylococcus aureus (strain Mu3 / ATCC 700698).